We begin with the raw amino-acid sequence, 216 residues long: FMN-dependent NADH:quinone oxidoreductase (216 aa).

FMN-binding positions include S15–S17 and S139–G142.

It belongs to the azoreductase type 1 family. Homodimer. Requires FMN as cofactor.

It carries out the reaction 2 a quinone + NADH + H(+) = 2 a 1,4-benzosemiquinone + NAD(+). The catalysed reaction is N,N-dimethyl-1,4-phenylenediamine + anthranilate + 2 NAD(+) = 2-(4-dimethylaminophenyl)diazenylbenzoate + 2 NADH + 2 H(+). In terms of biological role, quinone reductase that provides resistance to thiol-specific stress caused by electrophilic quinones. Also exhibits azoreductase activity. Catalyzes the reductive cleavage of the azo bond in aromatic azo compounds to the corresponding amines. The protein is FMN-dependent NADH:quinone oxidoreductase of Acidovorax ebreus (strain TPSY) (Diaphorobacter sp. (strain TPSY)).